A 249-amino-acid polypeptide reads, in one-letter code: General transcription factor IIF subunit 2 (249 aa).

N-acetylalanine is present on Ala2. Residues Lys22, Lys33, and Lys137 each carry the N6-acetyllysine modification. A Phosphoserine modification is found at Ser142. Gly227 and His229 together coordinate DNA. A Phosphoserine modification is found at Ser248.

Belongs to the TFIIF beta subunit family. As to quaternary structure, heterodimer of an alpha and a beta subunit. Interacts with HTATSF1 and URI1. Interacts with GPBP1. Interacts with GTF2B (via N-terminus); this interaction is inhibited in presence of GTF2F1. Part of TBP-based Pol II pre-initiation complex (PIC), in which Pol II core assembles with general transcription factors and other specific initiation factors including GTF2E1, GTF2E2, GTF2F1, GTF2F2, TCEA1, ERCC2, ERCC3, GTF2H2, GTF2H3, GTF2H4, GTF2H5, GTF2A1, GTF2A2, GTF2B and TBP; this large multi-subunit PIC complex mediates DNA unwinding and targets Pol II core to the transcription start site where the first phosphodiester bond forms.

The protein resides in the nucleus. TFIIF is a general transcription initiation factor that binds to RNA polymerase II and helps to recruit it to the initiation complex in collaboration with TFIIB. In Mus musculus (Mouse), this protein is General transcription factor IIF subunit 2 (Gtf2f2).